A 357-amino-acid polypeptide reads, in one-letter code: UDP-N-acetylglucosamine--N-acetylmuramyl-(pentapeptide) pyrophosphoryl-undecaprenol N-acetylglucosamine transferase (357 aa).

Residues 10–12 (TGG), Asn-124, Ser-189, Ile-244, and Gln-289 contribute to the UDP-N-acetyl-alpha-D-glucosamine site.

Belongs to the glycosyltransferase 28 family. MurG subfamily.

The protein resides in the cell membrane. The enzyme catalyses Mur2Ac(oyl-L-Ala-gamma-D-Glu-L-Lys-D-Ala-D-Ala)-di-trans,octa-cis-undecaprenyl diphosphate + UDP-N-acetyl-alpha-D-glucosamine = beta-D-GlcNAc-(1-&gt;4)-Mur2Ac(oyl-L-Ala-gamma-D-Glu-L-Lys-D-Ala-D-Ala)-di-trans,octa-cis-undecaprenyl diphosphate + UDP + H(+). Its pathway is cell wall biogenesis; peptidoglycan biosynthesis. Functionally, cell wall formation. Catalyzes the transfer of a GlcNAc subunit on undecaprenyl-pyrophosphoryl-MurNAc-pentapeptide (lipid intermediate I) to form undecaprenyl-pyrophosphoryl-MurNAc-(pentapeptide)GlcNAc (lipid intermediate II). The polypeptide is UDP-N-acetylglucosamine--N-acetylmuramyl-(pentapeptide) pyrophosphoryl-undecaprenol N-acetylglucosamine transferase (Lactococcus lactis subsp. cremoris (strain MG1363)).